Consider the following 288-residue polypeptide: Homoserine kinase (288 aa).

ATP is bound at residue 79–89 (PPARGLGSSSA).

The protein belongs to the GHMP kinase family. Homoserine kinase subfamily.

The protein localises to the cytoplasm. The catalysed reaction is L-homoserine + ATP = O-phospho-L-homoserine + ADP + H(+). The protein operates within amino-acid biosynthesis; L-threonine biosynthesis; L-threonine from L-aspartate: step 4/5. In terms of biological role, catalyzes the ATP-dependent phosphorylation of L-homoserine to L-homoserine phosphate. The polypeptide is Homoserine kinase (Listeria welshimeri serovar 6b (strain ATCC 35897 / DSM 20650 / CCUG 15529 / CIP 8149 / NCTC 11857 / SLCC 5334 / V8)).